We begin with the raw amino-acid sequence, 425 residues long: Mothers against decapentaplegic homolog 3 (425 aa).

Ser-2 carries the N-acetylserine modification. Thr-8 is modified (phosphothreonine; by CDK2 and CDK4). The MH1 domain maps to 10–136 (PIVKRLLGWK…YQRVETPVLP (127 aa)). A Glycyl lysine isopeptide (Lys-Gly) (interchain with G-Cter in ubiquitin) cross-link involves residue Lys-33. Residue Cys-64 coordinates Zn(2+). A Glycyl lysine isopeptide (Lys-Gly) (interchain with G-Cter in ubiquitin) cross-link involves residue Lys-81. The Zn(2+) site is built by Cys-109, Cys-121, and His-126. The interval 137-231 (PVLVPRHTEI…QPVTYCEPAF (95 aa)) is linker. The span at 165-177 (NFPAGIEPQSNIP) shows a compositional bias: polar residues. Positions 165-208 (NFPAGIEPQSNIPETPPPGYLSEDGETSDHQMNHSMDAGSPNLS) are disordered. Phosphothreonine; by CDK2, CDK4 and MAPK is present on Thr-179. Residue Ser-204 is modified to Phosphoserine; by GSK3 and MAPK. At Ser-208 the chain carries Phosphoserine; by MAPK. Ser-213 is subject to Phosphoserine; by CDK2 and CDK4. An MH2 domain is found at 232–425 (WCSISYYELN…SPSIRCSSVS (194 aa)). The tract at residues 271–324 (LGLLSNVNRNAAVELTRRHIGRGVRLYYIGGEVFAECLSDSAIFVQSPNCNQRY) is sufficient for interaction with XPO4. Lys-378 carries the post-translational modification N6-acetyllysine. Ser-416 bears the Phosphoserine mark. Ser-418 carries the post-translational modification Phosphoserine; by CK1. Residues Ser-422, Ser-423, and Ser-425 each carry the phosphoserine; by TGFBR1 modification.

It belongs to the dwarfin/SMAD family. As to quaternary structure, monomer; in the absence of TGF-beta. Homooligomer; in the presence of TGF-beta. Heterotrimer; forms a heterotrimer in the presence of TGF-beta consisting of two molecules of C-terminally phosphorylated SMAD2 or SMAD3 and one of SMAD4 to form the transcriptionally active SMAD2/SMAD3-SMAD4 complex. Part of a complex consisting of MAGI2/ARIP1, ACVR2A, ACVR1B and SMAD3. Forms a complex with SMAD2 and TRIM33 upon addition of TGF-beta. Found in a complex composed of SMAD3, RAN and XPO4; within the complex interacts directly with XPO4. Component of the multimeric complex SMAD3/SMAD4/JUN/FOS which forms at the AP1 promoter site; required for synergistic transcriptional activity in response to TGF-beta. Part of a ternary complex composed of SMAD3, ITCH/AIP4 and NEDD9/HEF1; within the complex NEDD9/HEF1 interacts (via N-terminus) with ITCH/AIP4; the complex mediates ubiquitination and proteasomal degradation of NEDD9/HEF1. Interacts with NEDD9; the interaction promotes NEDD9 ubiquitination and proteasomal degradation. Interacts (via an N-terminal domain) with JUN (via its basic DNA binding and leucine zipper domains); this interaction is essential for DNA binding and cooperative transcriptional activity in response to TGF-beta. Identified in a complex that contains at least ZNF451, SMAD2, SMAD3 and SMAD4. Interacts with PPM1A; the interaction dephosphorylates SMAD3 in the C-terminal SXS motif leading to disruption of the SMAD2/3-SMAD4 complex, nuclear export and termination of TGF-beta signaling. Interacts (via MH2 domain) with ZMIZ1 (via SP-RING-type domain); in the TGF-beta signaling pathway increases the activity of the SMAD3/SMAD4 transcriptional complex. Interacts (when phosphorylated) with RNF111; RNF111 acts as an enhancer of the transcriptional responses by mediating ubiquitination and degradation of SMAD3 inhibitors. Interacts (dephosphorylated form via the MH1 and MH2 domains) with RANBP3 (via its C-terminal R domain); the interaction results in the export of dephosphorylated SMAD3 out of the nucleus and termination of the TGF-beta signaling. Interacts (via MH2 domain) with LEMD3; the interaction represses SMAD3 transcriptional activity through preventing the formation of the heteromeric complex with SMAD4 and translocation to the nucleus. Interacts (via the linker region) with EP300 (C-terminal); the interaction promotes SMAD3 acetylation and is enhanced by TGF-beta phosphorylation in the C-terminal of SMAD3. This interaction can be blocked by competitive binding of adenovirus oncoprotein E1A to the same C-terminal site on EP300, which then results in partially inhibited SMAD3/SMAD4 transcriptional activity. Interacts with TGFBR1. Interacts with TGFB1I1. Interacts with PRDM16. Interacts with SNW1. Interacts (via MH2 domain) with ZFYVE9. Interacts with HDAC1. Interacts with TGIF2. Interacts with SKOR1. Interacts with SKOR2. Interacts with DACH1; the interaction inhibits the TGF-beta signaling. Interacts with RBPMS. Interacts (via MH2 domain) with MECOM. Interacts with WWTR1 (via its coiled-coil domain). Interacts with SKI; the interaction represses SMAD3 transcriptional activity. Interacts with MEN1. Interacts with IL1F7. Interaction with CSNK1G2. Interacts with PDPK1 (via PH domain). Interacts with DAB2; the interactions are enhanced upon TGF-beta stimulation. Interacts with USP15. Interacts with PPP5C; the interaction decreases SMAD3 phosphorylation and protein levels. Interacts with LDLRAD4 (via the SMAD interaction motif). Interacts with PMEPA1. Interacts with ZNF451. Interacts with ZFHX3. Interacts weakly with ZNF8. Interacts with STUB1, HSPA1A, HSPA1B, HSP90AA1 and HSP90AB1. Interacts with YAP1 (when phosphorylated at 'Ser-55'). Interacts with MAGI2/ARIP1. Interacts (via MH2 domain) with CITED2 (via C-terminus). Interacts with HGS. Interacts with WWP1. Interacts with TTRAP. Interacts with FOXL2. Interacts with PML. Interacts with NEDD4L; the interaction requires TGF-beta stimulation. Interacts with ZC3H3. Interacts with TGIF. Interacts with CREBBP. Interacts with ATF2. Interacts with NEDD9; the interaction is inhibited by oxidation of NEDD9. Interacts with MTMR4; negatively regulates TGF-beta signaling through SMAD3 dephosphorylation and retention in endosomes. Phosphorylated on serine and threonine residues. Enhanced phosphorylation in the linker region on Thr-179, Ser-204 and Ser-208 on EGF and TGF-beta treatment. Ser-208 is the main site of MAPK-mediated phosphorylation. CDK-mediated phosphorylation occurs in a cell-cycle dependent manner and inhibits both the transcriptional activity and antiproliferative functions of SMAD3. This phosphorylation is inhibited by flavopiridol. Maximum phosphorylation at the G(1)/S junction. Also phosphorylated on serine residues in the C-terminal SXS motif by TGFBR1 and ACVR1. TGFBR1-mediated phosphorylation at these C-terminal sites is required for interaction with SMAD4, nuclear location and transactivational activity, and appears to be a prerequisite for the TGF-beta mediated phosphorylation in the linker region. Dephosphorylated in the C-terminal SXS motif by PPM1A. This dephosphorylation disrupts the interaction with SMAD4, promotes nuclear export and terminates TGF-beta-mediated signaling. Phosphorylation at Ser-418 by CSNK1G2/CK1 promotes ligand-dependent ubiquitination and subsequent proteasome degradation, thus inhibiting SMAD3-mediated TGF-beta responses. Phosphorylated by PDPK1. In terms of processing, acetylation in the nucleus by EP300 in the MH2 domain regulates positively its transcriptional activity and is enhanced by TGF-beta. Post-translationally, poly-ADP-ribosylated by PARP1 and PARP2. ADP-ribosylation negatively regulates SMAD3 transcriptional responses during the course of TGF-beta signaling. Ubiquitinated. Monoubiquitinated, leading to prevent DNA-binding. Deubiquitination by USP15 alleviates inhibition and promotes activation of TGF-beta target genes. Ubiquitinated by RNF111, leading to its degradation: only SMAD3 proteins that are 'in use' are targeted by RNF111, RNF111 playing a key role in activating SMAD3 and regulating its turnover. Undergoes STUB1-mediated ubiquitination and degradation. In terms of tissue distribution, highly expressed in the brain and ovary. Detected in the pyramidal cells of the hippocampus, granule cells of the dentate gyrus, granular cells of the cerebral cortex and the granulosa cells of the ovary.

The protein localises to the cytoplasm. Its subcellular location is the nucleus. Receptor-regulated SMAD (R-SMAD) that is an intracellular signal transducer and transcriptional modulator activated by TGF-beta (transforming growth factor) and activin type 1 receptor kinases. Binds the TRE element in the promoter region of many genes that are regulated by TGF-beta and, on formation of the SMAD3/SMAD4 complex, activates transcription. Also can form a SMAD3/SMAD4/JUN/FOS complex at the AP-1/SMAD site to regulate TGF-beta-mediated transcription. Has an inhibitory effect on wound healing probably by modulating both growth and migration of primary keratinocytes and by altering the TGF-mediated chemotaxis of monocytes. This effect on wound healing appears to be hormone-sensitive. Regulator of chondrogenesis and osteogenesis and inhibits early healing of bone fractures. Positively regulates PDPK1 kinase activity by stimulating its dissociation from the 14-3-3 protein YWHAQ which acts as a negative regulator. In Sus scrofa (Pig), this protein is Mothers against decapentaplegic homolog 3 (SMAD3).